The sequence spans 472 residues: Acyltransferase PapA3 (472 aa).

The protein belongs to the PapA acyltransferase family.

It catalyses the reaction a long-chain fatty acyl-CoA + alpha,alpha-trehalose = a 2-O-(long-chain fatty acyl)-alpha,alpha-trehalose + CoA. It carries out the reaction a mycolipenoyl-CoA + a 2-O-(long-chain fatty acyl)-alpha,alpha-trehalose = a 2-O-(long-chain fatty acyl)-3-O-mycolipenoyl-trehalose + CoA. The enzyme catalyses alpha,alpha-trehalose + hexadecanoyl-CoA = 2-O-hexadecanoyl-alpha,alpha-trehalose + CoA. The catalysed reaction is 2-O-hexadecanoyl-alpha,alpha-trehalose + hexadecanoyl-CoA = 2-O,3-O-dihexadecanoyl-alpha,alpha-trehalose + CoA. In terms of biological role, involved in the biosynthesis of polyacyltrehalose (PAT), a pentaacylated, trehalose-based glycolipid that could have a role in anchoring the bacterial capsule. Catalyzes the sequential transfer of two palmitoyl groups onto a single glucose residue of trehalose generating the diacylated product 2,3-diacyltrehalose (trehalose dipalmitate). The polypeptide is Acyltransferase PapA3 (papA3) (Mycobacterium tuberculosis (strain CDC 1551 / Oshkosh)).